We begin with the raw amino-acid sequence, 231 residues long: 7-cyano-7-deazaguanine synthase (231 aa).

8–18 provides a ligand contact to ATP; it reads FSGGQDSTTCL. Positions 188, 197, 200, and 203 each coordinate Zn(2+).

This sequence belongs to the QueC family. Zn(2+) serves as cofactor.

It catalyses the reaction 7-carboxy-7-deazaguanine + NH4(+) + ATP = 7-cyano-7-deazaguanine + ADP + phosphate + H2O + H(+). The protein operates within purine metabolism; 7-cyano-7-deazaguanine biosynthesis. In terms of biological role, catalyzes the ATP-dependent conversion of 7-carboxy-7-deazaguanine (CDG) to 7-cyano-7-deazaguanine (preQ(0)). The chain is 7-cyano-7-deazaguanine synthase from Salmonella newport (strain SL254).